We begin with the raw amino-acid sequence, 541 residues long: Tyrosine-protein kinase Yes (541 aa).

Residues 1 to 20 show a composition bias toward basic and acidic residues; that stretch reads MGCIKSKEDKGPAMKYRTDN. The tract at residues 1-43 is disordered; the sequence is MGCIKSKEDKGPAMKYRTDNTPEPISSHVSHYGSDSSQATQSP. G2 is lipidated: N-myristoyl glycine. C3 carries the S-palmitoyl cysteine; in membrane form lipid modification. Low complexity predominate over residues 26 to 37; sequence SSHVSHYGSDSS. The region spanning 89–150 is the SH3 domain; sequence GGVTVFVALY…PSNYVAPADS (62 aa). The SH2 domain occupies 156-253; it reads WYFGKMGRKD…GLCHKLTTVC (98 aa). The Protein kinase domain maps to 275-528; sequence LRLEVKLGQG…YIQSFLEDYF (254 aa). Residues 281-289 and K303 contribute to the ATP site; that span reads LGQGCFGEV. The Proton acceptor role is filled by D394. Y424 carries the phosphotyrosine; by autocatalysis modification. Y535 is subject to Phosphotyrosine; by CSK.

It belongs to the protein kinase superfamily. Tyr protein kinase family. SRC subfamily. Autophosphorylation at Tyr-424 maintains enzyme activity. Post-translationally, palmitoylation at Cys-3 promotes membrane localization.

Its subcellular location is the cell membrane. It is found in the cytoplasm. The protein resides in the cytoskeleton. It localises to the microtubule organizing center. The protein localises to the centrosome. Its subcellular location is the cytosol. It is found in the cell junction. It catalyses the reaction L-tyrosyl-[protein] + ATP = O-phospho-L-tyrosyl-[protein] + ADP + H(+). Its function is as follows. Non-receptor protein tyrosine kinase that is involved in the regulation of cell growth and survival, apoptosis, cell-cell adhesion, cytoskeleton remodeling, differentiation, G2/M progression and cytokinesis. In Gallus gallus (Chicken), this protein is Tyrosine-protein kinase Yes (YES1).